Reading from the N-terminus, the 155-residue chain is SsrA-binding protein (155 aa).

The interval 135 to 155 is disordered; it reads KRESLKRRQDQRDIQRAMKNY.

It belongs to the SmpB family.

The protein localises to the cytoplasm. Required for rescue of stalled ribosomes mediated by trans-translation. Binds to transfer-messenger RNA (tmRNA), required for stable association of tmRNA with ribosomes. tmRNA and SmpB together mimic tRNA shape, replacing the anticodon stem-loop with SmpB. tmRNA is encoded by the ssrA gene; the 2 termini fold to resemble tRNA(Ala) and it encodes a 'tag peptide', a short internal open reading frame. During trans-translation Ala-aminoacylated tmRNA acts like a tRNA, entering the A-site of stalled ribosomes, displacing the stalled mRNA. The ribosome then switches to translate the ORF on the tmRNA; the nascent peptide is terminated with the 'tag peptide' encoded by the tmRNA and targeted for degradation. The ribosome is freed to recommence translation, which seems to be the essential function of trans-translation. This Trichormus variabilis (strain ATCC 29413 / PCC 7937) (Anabaena variabilis) protein is SsrA-binding protein.